Consider the following 443-residue polypeptide: F-box only protein 39 (443 aa).

In terms of domain architecture, F-box spans 13–59; sequence QSCWATLPDVCLRRVFWWLGDRDRSRAALVCRKWNQIMYSADLWRYR.

As to quaternary structure, directly interacts with SKP1 and CUL1.

Its function is as follows. Substrate-recognition component of the SCF (SKP1-CUL1-F-box protein)-type E3 ubiquitin ligase complex. In Mus musculus (Mouse), this protein is F-box only protein 39 (Fbxo39).